A 594-amino-acid chain; its full sequence is Aspartate--tRNA(Asp/Asn) ligase (594 aa).

Glu-173 is an L-aspartate binding site. The interval 197-200 (QLFK) is aspartate. Arg-219 contacts L-aspartate. Residues 219 to 221 (RDE) and Gln-228 each bind ATP. His-451 provides a ligand contact to L-aspartate. Glu-485 lines the ATP pocket. Arg-492 contributes to the L-aspartate binding site. An ATP-binding site is contributed by 537–540 (GWDR). Residues 566 to 594 (PLTDAPAPITAQQRKESGIDAQPKRVQQA) form a disordered region.

This sequence belongs to the class-II aminoacyl-tRNA synthetase family. Type 1 subfamily. As to quaternary structure, homodimer.

It localises to the cytoplasm. It catalyses the reaction tRNA(Asx) + L-aspartate + ATP = L-aspartyl-tRNA(Asx) + AMP + diphosphate. In terms of biological role, aspartyl-tRNA synthetase with relaxed tRNA specificity since it is able to aspartylate not only its cognate tRNA(Asp) but also tRNA(Asn). Reaction proceeds in two steps: L-aspartate is first activated by ATP to form Asp-AMP and then transferred to the acceptor end of tRNA(Asp/Asn). The sequence is that of Aspartate--tRNA(Asp/Asn) ligase from Mycobacterium tuberculosis (strain CDC 1551 / Oshkosh).